Consider the following 359-residue polypeptide: Peptide chain release factor 1 (359 aa).

Residue glutamine 236 is modified to N5-methylglutamine.

This sequence belongs to the prokaryotic/mitochondrial release factor family. Post-translationally, methylated by PrmC. Methylation increases the termination efficiency of RF1.

The protein resides in the cytoplasm. Functionally, peptide chain release factor 1 directs the termination of translation in response to the peptide chain termination codons UAG and UAA. The chain is Peptide chain release factor 1 from Streptococcus pyogenes serotype M12 (strain MGAS2096).